Here is a 185-residue protein sequence, read N- to C-terminus: Orotate phosphoribosyltransferase (185 aa).

Residues Arg94, Lys95, Lys98, His100, and 120–128 (EDVTTTGGS) each bind 5-phospho-alpha-D-ribose 1-diphosphate. Residues Thr124 and Arg152 each contribute to the orotate site.

Belongs to the purine/pyrimidine phosphoribosyltransferase family. PyrE subfamily. As to quaternary structure, homodimer. Mg(2+) is required as a cofactor.

It catalyses the reaction orotidine 5'-phosphate + diphosphate = orotate + 5-phospho-alpha-D-ribose 1-diphosphate. Its pathway is pyrimidine metabolism; UMP biosynthesis via de novo pathway; UMP from orotate: step 1/2. Catalyzes the transfer of a ribosyl phosphate group from 5-phosphoribose 1-diphosphate to orotate, leading to the formation of orotidine monophosphate (OMP). The protein is Orotate phosphoribosyltransferase of Thermococcus kodakarensis (strain ATCC BAA-918 / JCM 12380 / KOD1) (Pyrococcus kodakaraensis (strain KOD1)).